A 177-amino-acid polypeptide reads, in one-letter code: Large ribosomal subunit protein uL6 (177 aa).

This sequence belongs to the universal ribosomal protein uL6 family. In terms of assembly, part of the 50S ribosomal subunit.

Functionally, this protein binds to the 23S rRNA, and is important in its secondary structure. It is located near the subunit interface in the base of the L7/L12 stalk, and near the tRNA binding site of the peptidyltransferase center. The protein is Large ribosomal subunit protein uL6 of Neisseria gonorrhoeae (strain ATCC 700825 / FA 1090).